The following is a 258-amino-acid chain: Homeobox-leucine zipper protein ATHB-7 (258 aa).

The homeobox DNA-binding region spans 29–88 (NKNNQRRFSDEQIKSLEMMFESETRLEPRKKVQLARELGLQPRQVAIWFQNKRARWKSKQ). The interval 89 to 124 (LETEYNILRQNYDNLASQFESLKKEKQALVSELQRL) is leucine-zipper. Residues 149–183 (SSTHHESENEENRRRKPEEVRPEMEMKDDKGHHGV) are disordered. Positions 151–183 (THHESENEENRRRKPEEVRPEMEMKDDKGHHGV) are enriched in basic and acidic residues.

It belongs to the HD-ZIP homeobox family. Class I subfamily. Interacts with TBP2 and TFIIB1. As to expression, widely expressed.

The protein resides in the nucleus. In terms of biological role, probable transcription activator that may act as growth regulators in response to water deficit. In Arabidopsis thaliana (Mouse-ear cress), this protein is Homeobox-leucine zipper protein ATHB-7 (ATHB-7).